Here is a 431-residue protein sequence, read N- to C-terminus: Nuclear receptor subfamily 1 group I member 2 (431 aa).

Positions 35–104 (LQICRVCGDK…RLRKCLESGM (70 aa)) form a DNA-binding region, nuclear receptor. NR C4-type zinc fingers lie at residues 38 to 58 (CRVCGDKANGYHFNVMTCEGC) and 74 to 99 (CPFRKGTCEITRKTRRQCQACRLRKC). The short motif at 63–89 (RRAMKRNVRLRCPFRKGTCEITRKTRR) is the Bipartite nuclear localization signal element. Positions 105 to 142 (KKEMIMSDAAVEQRRALIKRKKREKIEAPPPGGQGLTE) are hinge. One can recognise an NR LBD domain in the interval 143–430 (EQQALIQELM…LMQELFSSTD (288 aa)). Residues S244 and 282–285 (ILRF) contribute to the hyperforin site.

This sequence belongs to the nuclear hormone receptor family. NR1 subfamily. In terms of assembly, heterodimer with RXRA. Interacts with NCOA1. Interacts (via domain NR LBD) with CRY1 and CRY2 in a ligand-dependent manner.

The protein localises to the nucleus. Its function is as follows. Nuclear receptor that binds and is activated by a variety of endogenous and xenobiotic compounds. Transcription factor that activates the transcription of multiple genes involved in the metabolism and secretion of potentially harmful xenobiotics, endogenous compounds and drugs. Response to specific ligands is species-specific, due to differences in the ligand-binding domain. Binds to a response element in the promoters of the CYP3A4 and ABCB1/MDR1 genes. Activated by naturally occurring steroids such as pregnenolone and progesterone, the cholesterol metabolite 5-beta-cholestane-3-alpha,7-alpha,12-alpha-triol, synthetic glucocorticoids and antiglucocorticoids and 16-alpha-carbonitrile (PCN). This chain is Nuclear receptor subfamily 1 group I member 2 (Nr1i2), found in Mus musculus (Mouse).